A 248-amino-acid chain; its full sequence is 4-hydroxy-tetrahydrodipicolinate reductase (248 aa).

NAD(+)-binding positions include 9–14 (GARGKV), 77–79 (GTT), and 104–107 (APNF). The active-site Proton donor/acceptor is the histidine 134. (S)-2,3,4,5-tetrahydrodipicolinate is bound at residue histidine 135. Lysine 138 serves as the catalytic Proton donor. A (S)-2,3,4,5-tetrahydrodipicolinate-binding site is contributed by 144–145 (GT).

This sequence belongs to the DapB family.

The protein resides in the cytoplasm. It carries out the reaction (S)-2,3,4,5-tetrahydrodipicolinate + NAD(+) + H2O = (2S,4S)-4-hydroxy-2,3,4,5-tetrahydrodipicolinate + NADH + H(+). The catalysed reaction is (S)-2,3,4,5-tetrahydrodipicolinate + NADP(+) + H2O = (2S,4S)-4-hydroxy-2,3,4,5-tetrahydrodipicolinate + NADPH + H(+). It functions in the pathway amino-acid biosynthesis; L-lysine biosynthesis via DAP pathway; (S)-tetrahydrodipicolinate from L-aspartate: step 4/4. Catalyzes the conversion of 4-hydroxy-tetrahydrodipicolinate (HTPA) to tetrahydrodipicolinate. The protein is 4-hydroxy-tetrahydrodipicolinate reductase of Nocardia farcinica (strain IFM 10152).